The primary structure comprises 402 residues: GTPase HflX (402 aa).

Positions 181–350 constitute a Hflx-type G domain; sequence DTVGLIGYTN…MIIEHLNLSI (170 aa). Residues 187–194, 212–216, 233–236, 300–303, and 328–330 contribute to the GTP site; these read GYTNAGKT, FTTLT, DTVG, NKVD, and SAK. Residues Thr194 and Thr214 each coordinate Mg(2+).

The protein belongs to the TRAFAC class OBG-HflX-like GTPase superfamily. HflX GTPase family. Monomer. Associates with the 50S ribosomal subunit. The cofactor is Mg(2+).

Its subcellular location is the cytoplasm. GTPase that associates with the 50S ribosomal subunit and may have a role during protein synthesis or ribosome biogenesis. This Methanocaldococcus jannaschii (strain ATCC 43067 / DSM 2661 / JAL-1 / JCM 10045 / NBRC 100440) (Methanococcus jannaschii) protein is GTPase HflX.